The chain runs to 81 residues: Small ribosomal subunit protein bS18 (81 aa).

This sequence belongs to the bacterial ribosomal protein bS18 family. As to quaternary structure, part of the 30S ribosomal subunit. Forms a tight heterodimer with protein bS6.

Functionally, binds as a heterodimer with protein bS6 to the central domain of the 16S rRNA, where it helps stabilize the platform of the 30S subunit. The sequence is that of Small ribosomal subunit protein bS18 from Leptospira borgpetersenii serovar Hardjo-bovis (strain JB197).